Consider the following 488-residue polypeptide: Multidrug resistance outer membrane protein MdtP (488 aa).

The N-terminal stretch at 1–23 (MINRQLSRLLLCSILGSTTLISG) is a signal peptide. Cys24 carries the N-palmitoyl cysteine lipid modification. The S-diacylglycerol cysteine moiety is linked to residue Cys24.

It belongs to the outer membrane factor (OMF) (TC 1.B.17) family. As to quaternary structure, could be part of a tripartite efflux system composed of MdtN, MdtO and MdtP.

The protein resides in the cell outer membrane. Its function is as follows. Could be involved in resistance to puromycin, acriflavine and tetraphenylarsonium chloride. This chain is Multidrug resistance outer membrane protein MdtP (mdtP), found in Escherichia coli (strain K12).